Consider the following 205-residue polypeptide: NADH-quinone oxidoreductase subunit J (205 aa).

5 helical membrane-spanning segments follow: residues 1–21 (MPIFFYLFATLITISSVCVVL), 26–46 (VYSVLWLIFAFINGAGLMILL), 54–74 (MLIVIYVGAVAVLFLFVIMML), 89–109 (LALSIFIALIMFADLVIIILL), and 142–162 (FMLPFQMAGLILFVAMIACIT).

It belongs to the complex I subunit 6 family.

It is found in the cell membrane. It catalyses the reaction a quinone + NADH + 5 H(+)(in) = a quinol + NAD(+) + 4 H(+)(out). Functionally, NDH-1 shuttles electrons from NADH, via FMN and iron-sulfur (Fe-S) centers, to quinones in the respiratory chain. Couples the redox reaction to proton translocation (for every two electrons transferred, four hydrogen ions are translocated across the cytoplasmic membrane), and thus conserves the redox energy in a proton gradient. The polypeptide is NADH-quinone oxidoreductase subunit J (nuoJ) (Rickettsia conorii (strain ATCC VR-613 / Malish 7)).